The primary structure comprises 386 residues: Na(+)/H(+) antiporter NhaA (386 aa).

The next 10 membrane-spanning stretches (helical) occupy residues 10-30, 45-65, 84-104, 116-136, 142-162, 169-189, 261-281, 287-307, 323-343, and 358-378; these read EFSIPLLAGVLTALVWANVAP, LSFHFVTNDIFMAFFFAIAAV, LNPLLATAGGVVGPVGVYLAL, GWGIPTATDIAFAWLAARLIF, VIAFLLLLAIADDAIGLVIIA, VLPVAPPWLMLTAAGMLIAFI, IIVDFGLFMFGLANAGVGFSA, WLVFCALLFGKVTGIFVFALL, HLLVAGIIAGIGFTVALFVAG, and GAILSIAVFPVAMAAAKLLGI.

This sequence belongs to the NhaA Na(+)/H(+) (TC 2.A.33) antiporter family.

The protein localises to the cell inner membrane. The enzyme catalyses Na(+)(in) + 2 H(+)(out) = Na(+)(out) + 2 H(+)(in). Functionally, na(+)/H(+) antiporter that extrudes sodium in exchange for external protons. This is Na(+)/H(+) antiporter NhaA from Geotalea uraniireducens (strain Rf4) (Geobacter uraniireducens).